Reading from the N-terminus, the 331-residue chain is Anthranilate phosphoribosyltransferase (331 aa).

Residues Gly81, 84 to 85, Ser89, 91 to 94, 109 to 117, and Ser121 contribute to the 5-phospho-alpha-D-ribose 1-diphosphate site; these read GD, NCST, and KHGNRAVSS. Gly81 contacts anthranilate. Position 93 (Ser93) interacts with Mg(2+). Position 112 (Asn112) interacts with anthranilate. Arg167 lines the anthranilate pocket. Mg(2+) is bound by residues Asp226 and Glu227.

Belongs to the anthranilate phosphoribosyltransferase family. In terms of assembly, homodimer. Mg(2+) serves as cofactor.

The catalysed reaction is N-(5-phospho-beta-D-ribosyl)anthranilate + diphosphate = 5-phospho-alpha-D-ribose 1-diphosphate + anthranilate. It participates in amino-acid biosynthesis; L-tryptophan biosynthesis; L-tryptophan from chorismate: step 2/5. Functionally, catalyzes the transfer of the phosphoribosyl group of 5-phosphorylribose-1-pyrophosphate (PRPP) to anthranilate to yield N-(5'-phosphoribosyl)-anthranilate (PRA). The chain is Anthranilate phosphoribosyltransferase from Oleidesulfovibrio alaskensis (strain ATCC BAA-1058 / DSM 17464 / G20) (Desulfovibrio alaskensis).